The chain runs to 298 residues: ATP phosphoribosyltransferase (298 aa).

The protein belongs to the ATP phosphoribosyltransferase family. Long subfamily. The cofactor is Mg(2+).

The protein resides in the cytoplasm. It carries out the reaction 1-(5-phospho-beta-D-ribosyl)-ATP + diphosphate = 5-phospho-alpha-D-ribose 1-diphosphate + ATP. Its pathway is amino-acid biosynthesis; L-histidine biosynthesis; L-histidine from 5-phospho-alpha-D-ribose 1-diphosphate: step 1/9. Feedback inhibited by histidine. Catalyzes the condensation of ATP and 5-phosphoribose 1-diphosphate to form N'-(5'-phosphoribosyl)-ATP (PR-ATP). Has a crucial role in the pathway because the rate of histidine biosynthesis seems to be controlled primarily by regulation of HisG enzymatic activity. The polypeptide is ATP phosphoribosyltransferase (hisG) (Photobacterium profundum (strain SS9)).